Here is a 441-residue protein sequence, read N- to C-terminus: Heat shock factor protein 4 (441 aa).

The DNA-binding element occupies Asn-17 to Lys-121. A hydrophobic repeat HR-A/B region spans residues Thr-130–Val-205.

This sequence belongs to the HSF family. In terms of tissue distribution, predominantly expressed in the eye.

The protein resides in the nucleus. Heat-shock transcription factor that specifically binds heat shock promoter elements (HSE). Required for denucleation and organelle rupture and degradation that occur during eye lens terminal differentiation, when fiber cells that compose the lens degrade all membrane-bound organelles in order to provide lens with transparency to allow the passage of light. In this process, may regulate denucleation of lens fiber cells in part by activating dnase1l1l and dnase2b transcription. May be involved in DNA repair through the transcriptional regulation of rad51. May up-regulate TP53 protein in lens fiber cells, possibly through protein stabilization. In the eye lens, controls the expression of alpha-crystallin B chain/CRYAB and consequently may be involved in the regulation of lysosomal acidification. The protein is Heat shock factor protein 4 of Danio rerio (Zebrafish).